The primary structure comprises 538 residues: MSQISRTQSIMATTAQEHLETGGRINWLASLNTAFTPARNFRRTSIICTIGPKTNSVEALNKLRDAGLNVARMNFSHGSYEYHQSVIDNVRASVAAHPGRPVAIALDTKGPEIRTGNTAGDVDIPISAGTVMNFTTDEKYATACDTQNMYVDYKNITKVIQPGRVIYVDDGVLAFDVLSIKDDQTVEVRARNNGFISSRKGVNLPNTDVDLPALSEKDKADLRFGVKNNVDMVFASFIRRAQDIKDIRDVLGPEGKQIQIIAKIENRQGLNNFAEILEETDGVMVARGDLGIEIPAAEVFAAQKKMIAMCNIAGKPVICATQMLESMIKNPRPTRAEISDVGNAVTDGADCVMLSGETAKGNYPAESIHEMHEASLKAENTIPYVSHFEEMCTLVKRPVSTVESCAMAAVRASLDLGAGGIIVLSTSGDSARLLSKYRPVCPIFMVTRNPTTSRFSHLYRGVYPFLYPEQKPDFDTVNWQEDVDKRIKWAVTRAIELKTLTAGDTVVVVQGWKGGMGNTNTLRIVRADPDHLGIGQME.

Ser45 carries the phosphoserine modification. Position 72 (Arg72) interacts with substrate. Residues Asn74, Ser76, Asp107, and Thr108 each coordinate K(+). Residue 74–77 coordinates ATP; that stretch reads NFSH. 2 residues coordinate ATP: Arg114 and Lys200. Mg(2+) is bound at residue Glu265. The substrate site is built by Gly288, Asp289, and Thr321. Asp289 lines the Mg(2+) pocket.

This sequence belongs to the pyruvate kinase family. In terms of assembly, homotetramer. It depends on Mg(2+) as a cofactor. K(+) serves as cofactor.

The enzyme catalyses pyruvate + ATP = phosphoenolpyruvate + ADP + H(+). The protein operates within carbohydrate degradation; glycolysis; pyruvate from D-glyceraldehyde 3-phosphate: step 5/5. The protein is Pyruvate kinase (pki1) of Hypocrea jecorina (Trichoderma reesei).